A 161-amino-acid chain; its full sequence is Large ribosomal subunit protein uL10 (161 aa).

The protein belongs to the universal ribosomal protein uL10 family. As to quaternary structure, part of the ribosomal stalk of the 50S ribosomal subunit. The N-terminus interacts with L11 and the large rRNA to form the base of the stalk. The C-terminus forms an elongated spine to which L12 dimers bind in a sequential fashion forming a multimeric L10(L12)X complex.

Forms part of the ribosomal stalk, playing a central role in the interaction of the ribosome with GTP-bound translation factors. This is Large ribosomal subunit protein uL10 from Buchnera aphidicola subsp. Cinara cedri (strain Cc).